The chain runs to 142 residues: Cell division protein SepF (142 aa).

It belongs to the SepF family. In terms of assembly, homodimer. Interacts with FtsZ.

It localises to the cytoplasm. In terms of biological role, cell division protein that is part of the divisome complex and is recruited early to the Z-ring. Probably stimulates Z-ring formation, perhaps through the cross-linking of FtsZ protofilaments. Its function overlaps with FtsA. This chain is Cell division protein SepF, found in Syntrophomonas wolfei subsp. wolfei (strain DSM 2245B / Goettingen).